The following is a 723-amino-acid chain: Polyribonucleotide nucleotidyltransferase (723 aa).

Mg(2+) contacts are provided by Asp487 and Asp493. Residues 554 to 613 form the KH domain; it reads PKILIMHINPDKIREVIGPSGKQINKIIDETGVKIDIEQDGTIFISSVDEAANQKAKQII. One can recognise an S1 motif domain in the interval 623 to 691; that stretch reads GQVYLGKVKR…KQGRVNLSRK (69 aa). Residues 702 to 723 are disordered; that stretch reads GELPRESREKRGRRPERHRMKP. Basic residues predominate over residues 711 to 723; sequence KRGRRPERHRMKP.

It belongs to the polyribonucleotide nucleotidyltransferase family. It depends on Mg(2+) as a cofactor.

The protein localises to the cytoplasm. It catalyses the reaction RNA(n+1) + phosphate = RNA(n) + a ribonucleoside 5'-diphosphate. Functionally, involved in mRNA degradation. Catalyzes the phosphorolysis of single-stranded polyribonucleotides processively in the 3'- to 5'-direction. This chain is Polyribonucleotide nucleotidyltransferase, found in Geobacillus kaustophilus (strain HTA426).